A 1738-amino-acid polypeptide reads, in one-letter code: Sodium leak channel NALCN (1738 aa).

At 1 to 36 (MLKRKQSSRVEAQPVTDFGPDESLSDNADILWINKP) the chain is on the cytoplasmic side. A helical transmembrane segment spans residues 37–57 (WVHSLLRICAIISVISVCMNT). Residues 58–65 (PMTFEHYP) lie on the Extracellular side of the membrane. A helical membrane pass occupies residues 66-90 (PLQYVTFTLDTLLMFLYTAEMIAKM). At 91 to 106 (HIRGIVKGDSSYVKDR) the chain is on the cytoplasmic side. Residues 107 to 129 (WCVFDGFMVFCLWVSLVLQVFEI) traverse the membrane as a helical segment. The Extracellular segment spans residues 130-137 (ADIVDQMS). Residues 138-158 (PWGMLRIPRPLIMIRAFRIYF) form a helical; Voltage-sensor membrane-spanning segment. Residues 159–173 (RFELPRTRITNILKR) lie on the Cytoplasmic side of the membrane. Residues 174-199 (SGEQIWSVSIFLLFFLLLYGILGVQM) form a helical membrane-spanning segment. Topologically, residues 200-269 (FGTFTYHCVV…YSGFNEIGTS (70 aa)) are extracellular. 2 disulfide bridges follow: Cys207–Cys239 and Cys229–Cys245. Residues Asn210 and Asn216 are each glycosylated (N-linked (GlcNAc...) asparagine). An intramembrane region (pore-forming) is located at residues 270–289 (IFTVYEASSQEGWVFLMYRA). The Extracellular portion of the chain corresponds to 290 to 294 (IDSFP). The chain crosses the membrane as a helical span at residues 295–322 (RWRSYFYFITLIFFLAWLVKNVFIAVII). Residues 323–382 (ETFAEIRVQFQQMWGTRSSTTSTATTQMFHEDAAGGWQLVAVDVNKPQGRAPACLQKMMR) are Cytoplasmic-facing. Residues 383-403 (SSVFHMFILSMVTVDVIVAAS) traverse the membrane as a helical segment. The Extracellular portion of the chain corresponds to 404-416 (NYYKGENFRRQYD). A helical membrane pass occupies residues 417–439 (EFYLAEVAFTVLFDLEALLKIWC). The Cytoplasmic segment spans residues 440-447 (LGFTGYIS). The helical transmembrane segment at 448–468 (SSLHKFELLLVIGTTLHVYPD) threads the bilayer. Residues 469–472 (LYHS) are Extracellular-facing. Residues 473–492 (QFTYFQVLRVVRLIKISPAL) form a helical; Voltage-sensor membrane-spanning segment. Over 493–502 (EDFVYKIFGP) the chain is Cytoplasmic. Residues 503–530 (GKKLGSLVVFTASLLIVMSAISLQMFCF) form a helical membrane-spanning segment. At 531–543 (VEELDRFTTFPRA) the chain is on the extracellular side. The pore-forming intramembrane region spans 544-563 (FMSMFQILTQEGWVDVMDQT). Over 564–578 (LNAVGHMWAPLVAIY) the chain is Extracellular. Residues 579–599 (FILYHLFATLILLSLFVAVIL) form a helical membrane-spanning segment. Topologically, residues 600-886 (DNLELDEDLK…QLYDLLGLVT (287 aa)) are cytoplasmic. The tract at residues 762-785 (QERRSLRHGSNSQRISRGKSLETL) is disordered. The stretch at 795-830 (YRNAQREDSEIKMIQEKKEQAEMKRKVQEEELRENH) forms a coiled coil. The helical transmembrane segment at 887 to 906 (YLDWVMITVTICSCISMMFE) threads the bilayer. Over 907–915 (SPFRRVMHA) the chain is Extracellular. The chain crosses the membrane as a helical span at residues 916–939 (PTLQIAEYVFVIFMSIELNLKIMA). Residues 940–947 (DGLFFTPT) are Cytoplasmic-facing. A helical transmembrane segment spans residues 948 to 972 (AVIRDFGGVMDIFIYLVSLIFLCWM). Over 973–980 (PQNVPAES) the chain is Extracellular. A helical; Voltage-sensor transmembrane segment spans residues 981–1003 (GAQLLMVLRCLRPLRIFKLVPQM). The Cytoplasmic segment spans residues 1004–1015 (RKVVRELFSGFK). Residues 1016 to 1039 (EIFLVSILLLTLMLVFASFGVQLF) form a helical membrane-spanning segment. The Extracellular segment spans residues 1040-1104 (AGKLAKCNDP…NFNFDNVGNA (65 aa)). An intrachain disulfide couples Cys1046 to Cys1057. Asn1064 carries N-linked (GlcNAc...) asparagine glycosylation. Residues 1105-1124 (MLALFEVLSLKGWVEVRDVI) constitute an intramembrane region (pore-forming). Residues 1125–1129 (IHRVG) are Extracellular-facing. A helical membrane pass occupies residues 1130 to 1159 (PIHGIYIHVFVFLGCMIGLTLFVGVVIANF). Over 1160–1210 (NENKGTALLTVDQRRWEDLKSRLKIAQPLHLPPRPDNDGFRAKMYDITQHP) the chain is Cytoplasmic. A helical membrane pass occupies residues 1211–1227 (FFKRTIALLVLAQSVLL). At 1228 to 1236 (SVKWDVDDP) the chain is on the extracellular side. A helical membrane pass occupies residues 1237-1260 (VTVPLATMSVVFTFIFVLEVTMKI). The Cytoplasmic segment spans residues 1261 to 1271 (IAMSPAGFWQS). Residues 1272-1293 (RRNRYDLLVTSLGVVWVVLHFA) form a helical membrane-spanning segment. The Extracellular segment spans residues 1294 to 1296 (LLN). A helical; Voltage-sensor transmembrane segment spans residues 1297-1318 (AYTYMMGACVIVFRFFSICGKH). Over 1319–1331 (VTLKMLLLTVVVS) the chain is Cytoplasmic. The chain crosses the membrane as a helical span at residues 1332–1357 (MYKSFFIIVGMFLLLLCYAFAGVVLF). At 1358 to 1378 (GTVKYGENINRHANFSSAGKA) the chain is on the extracellular side. The pore-forming intramembrane region spans 1379-1398 (ITVLFRIVTGEDWNKIMHDC). The Extracellular portion of the chain corresponds to 1399–1420 (MVQPPFCTPDEFTYWATDCGNY). An intrachain disulfide couples Cys1405 to Cys1417. The helical transmembrane segment at 1421–1447 (AGALMYFCSFYVIIAYIMLNLLVAIIV) threads the bilayer. The Cytoplasmic portion of the chain corresponds to 1448–1738 (ENFSLFYSTE…DESGDDLLDI (291 aa)). Residues 1602 to 1679 (EQERSRFLNP…WRLPSAPKPI (78 aa)) form a disordered region. Polar residues predominate over residues 1613–1631 (SIETTQPSEDSNANSQDHS). Over residues 1633 to 1648 (QPETSSQQQLLSPTLS) the composition is skewed to low complexity.

Belongs to the NALCN family. In terms of assembly, found in a complex with NALCN, UNC79, UNC80 and NACL1; these auxiliary subunits are indispensable for the function of the NALCN channel. Interacts with UNC80; required for the NALCN activation/inhibition by GPCRs in neurons. Found in a complex with NALCN, UNC79 and UNC80; UNC80 bridges NALCN to UNC79. Interacts with CHRM3. Post-translationally, phosphorylated on tyrosine residues. As to expression, widely expressed in the brain and spinal cord neurons. Expressed also in pancreatic islet cells.

The protein resides in the cell membrane. It carries out the reaction Na(+)(in) = Na(+)(out). Its activity is regulated as follows. Inhibited by low micromolar concentrations of Gd(3+) and high micromolar concentrations of verapamil. Insensitive to tetrodotoxin (TTX) and potentiated by low external Ca(2+) concentration. Its function is as follows. Voltage-gated ion channel responsible for the resting Na(+) permeability that controls neuronal excitability. NALCN channel functions as a multi-protein complex, which consists at least of NALCN, NALF1, UNC79 and UNC80. NALCN is the voltage-sensing, pore-forming subunit of the NALCN channel complex. NALCN channel complex is constitutively active and conducts monovalent cations but is blocked by physiological concentrations of extracellular divalent cations. In addition to its role in regulating neuronal excitability, is required for normal respiratory rhythm, systemic osmoregulation by controlling the serum sodium concentration and in the regulation of the intestinal pace-making activity in the interstitial cells of Cajal. Plays a critical role in both maintenance of spontaneous firing of substantia nigra pars reticulata (SNr) neurons and physiological modulation of SNr neuron excitability. NALCN channel is also activated by neuropeptides such as neurotensin and substance P (SP) through a SRC family kinases-dependent pathway. In addition, NALCN activity is enhanced/modulated by several GPCRs, such as CHRM3. This Mus musculus (Mouse) protein is Sodium leak channel NALCN (Nalcn).